We begin with the raw amino-acid sequence, 374 residues long: Palmitoyltransferase PFA5 (374 aa).

The Cytoplasmic portion of the chain corresponds to Met-1–Ser-13. A helical membrane pass occupies residues Trp-14 to Tyr-34. The Lumenal segment spans residues Cys-35–Gly-55. A helical membrane pass occupies residues Leu-56–Ile-76. The Cytoplasmic portion of the chain corresponds to Leu-77–Leu-173. Residues Ile-129–Ala-179 form the DHHC domain. The helical transmembrane segment at Phe-174 to Val-194 threads the bilayer. At Tyr-195–Thr-217 the chain is on the lumenal side. A helical transmembrane segment spans residues Leu-218 to Tyr-238. Residues Met-239–Tyr-374 are Cytoplasmic-facing.

The protein belongs to the DHHC palmitoyltransferase family. PFA5 subfamily. Post-translationally, autopalmitoylated.

It is found in the membrane. It catalyses the reaction L-cysteinyl-[protein] + hexadecanoyl-CoA = S-hexadecanoyl-L-cysteinyl-[protein] + CoA. This is Palmitoyltransferase PFA5 (PFA5) from Saccharomyces cerevisiae (strain ATCC 204508 / S288c) (Baker's yeast).